A 210-amino-acid chain; its full sequence is 2-hydroxy-3-keto-5-methylthiopentenyl-1-phosphate phosphatase (210 aa).

The protein belongs to the HAD-like hydrolase superfamily. MtnX family.

The catalysed reaction is 2-hydroxy-5-methylsulfanyl-3-oxopent-1-enyl phosphate + H2O = 1,2-dihydroxy-5-(methylsulfanyl)pent-1-en-3-one + phosphate. It functions in the pathway amino-acid biosynthesis; L-methionine biosynthesis via salvage pathway; L-methionine from S-methyl-5-thio-alpha-D-ribose 1-phosphate: step 4/6. Dephosphorylates 2-hydroxy-3-keto-5-methylthiopentenyl-1-phosphate (HK-MTPenyl-1-P) yielding 1,2-dihydroxy-3-keto-5-methylthiopentene (DHK-MTPene). The polypeptide is 2-hydroxy-3-keto-5-methylthiopentenyl-1-phosphate phosphatase (Microcystis aeruginosa).